An 872-amino-acid polypeptide reads, in one-letter code: Alanine--tRNA ligase (872 aa).

Zn(2+)-binding residues include His-567, His-571, Cys-669, and His-673.

Belongs to the class-II aminoacyl-tRNA synthetase family. Zn(2+) serves as cofactor.

The protein localises to the cytoplasm. The catalysed reaction is tRNA(Ala) + L-alanine + ATP = L-alanyl-tRNA(Ala) + AMP + diphosphate. In terms of biological role, catalyzes the attachment of alanine to tRNA(Ala) in a two-step reaction: alanine is first activated by ATP to form Ala-AMP and then transferred to the acceptor end of tRNA(Ala). Also edits incorrectly charged Ser-tRNA(Ala) and Gly-tRNA(Ala) via its editing domain. This Streptococcus suis (strain 98HAH33) protein is Alanine--tRNA ligase.